A 508-amino-acid chain; its full sequence is Flagellin (508 aa).

It belongs to the bacterial flagellin family.

It localises to the secreted. Its subcellular location is the bacterial flagellum. In terms of biological role, flagellin is the subunit protein which polymerizes to form the filaments of bacterial flagella. The chain is Flagellin (fliC) from Salmonella berta.